The following is a 274-amino-acid chain: Large ribosomal subunit protein uL2c (274 aa).

Disordered stretches follow at residues 1–22 (MAIHLYKTSTPSTRNGAVDNQV) and 225–274 (PVDH…RRSK).

This sequence belongs to the universal ribosomal protein uL2 family. As to quaternary structure, part of the 50S ribosomal subunit.

The protein localises to the plastid. The protein resides in the chloroplast. In Silene latifolia (White campion), this protein is Large ribosomal subunit protein uL2c (rpl2).